The chain runs to 182 residues: ATP synthase subunit delta (182 aa).

This sequence belongs to the ATPase delta chain family. In terms of assembly, F-type ATPases have 2 components, F(1) - the catalytic core - and F(0) - the membrane proton channel. F(1) has five subunits: alpha(3), beta(3), gamma(1), delta(1), epsilon(1). F(0) has three main subunits: a(1), b(2) and c(10-14). The alpha and beta chains form an alternating ring which encloses part of the gamma chain. F(1) is attached to F(0) by a central stalk formed by the gamma and epsilon chains, while a peripheral stalk is formed by the delta and b chains.

It is found in the cell inner membrane. F(1)F(0) ATP synthase produces ATP from ADP in the presence of a proton or sodium gradient. F-type ATPases consist of two structural domains, F(1) containing the extramembraneous catalytic core and F(0) containing the membrane proton channel, linked together by a central stalk and a peripheral stalk. During catalysis, ATP synthesis in the catalytic domain of F(1) is coupled via a rotary mechanism of the central stalk subunits to proton translocation. In terms of biological role, this protein is part of the stalk that links CF(0) to CF(1). It either transmits conformational changes from CF(0) to CF(1) or is implicated in proton conduction. The protein is ATP synthase subunit delta of Sulfurihydrogenibium sp. (strain YO3AOP1).